We begin with the raw amino-acid sequence, 476 residues long: Glycogen synthase (476 aa).

Position 15 (K15) interacts with ADP-alpha-D-glucose.

It belongs to the glycosyltransferase 1 family. Bacterial/plant glycogen synthase subfamily.

The enzyme catalyses [(1-&gt;4)-alpha-D-glucosyl](n) + ADP-alpha-D-glucose = [(1-&gt;4)-alpha-D-glucosyl](n+1) + ADP + H(+). The protein operates within glycan biosynthesis; glycogen biosynthesis. In terms of biological role, synthesizes alpha-1,4-glucan chains using ADP-glucose. In Halalkalibacterium halodurans (strain ATCC BAA-125 / DSM 18197 / FERM 7344 / JCM 9153 / C-125) (Bacillus halodurans), this protein is Glycogen synthase.